We begin with the raw amino-acid sequence, 141 residues long: Hemoglobin subunit beta-C(NA) (141 aa).

The region spanning 1-141 (PBKALITGFW…VASALAHRYH (141 aa)) is the Globin domain. Positions 58 and 87 each coordinate heme b.

This sequence belongs to the globin family. Heterotetramer of two alpha chains and two beta chains. As to expression, red blood cells.

Involved in oxygen transport from the lung to the various peripheral tissues. This is Hemoglobin subunit beta-C(NA) from Ammotragus lervia (Barbary sheep).